We begin with the raw amino-acid sequence, 23 residues long: MWTKPKFEEMRLGFEVTLYISNR.

The segment at residues 15-19 (EVTLY) is a cross-link (pyrroloquinoline quinone (Glu-Tyr)).

This sequence belongs to the PqqA family.

Its pathway is cofactor biosynthesis; pyrroloquinoline quinone biosynthesis. Its function is as follows. Required for coenzyme pyrroloquinoline quinone (PQQ) biosynthesis. PQQ is probably formed by cross-linking a specific glutamate to a specific tyrosine residue and excising these residues from the peptide. The protein is Coenzyme PQQ synthesis protein A of Colwellia psychrerythraea (strain 34H / ATCC BAA-681) (Vibrio psychroerythus).